A 339-amino-acid polypeptide reads, in one-letter code: Ectoine/5-hydroxyectoine-binding periplasmic protein UehA (339 aa).

A signal peptide spans 1 to 20 (MAQSITFTFGAVAAAGIALA). 5 residues coordinate L-ectoine: Glu36, Arg171, Asn211, Phe215, and Phe236. Cys162 and Cys303 are oxidised to a cystine.

It belongs to the bacterial solute-binding protein 7 family. Monomer. The complex comprises the extracytoplasmic solute receptor protein UehA, and the two transmembrane proteins UehB and UehC.

The protein localises to the periplasm. In terms of biological role, part of the tripartite ATP-independent periplasmic (TRAP) transport system UehABC, which imports both ectoine and 5-hydroxyectoine as nutrients, and not as osmoprotectants. UehA binds both ectoine and 5-hydroxyectoine with high specificity and affinity. This Ruegeria pomeroyi (strain ATCC 700808 / DSM 15171 / DSS-3) (Silicibacter pomeroyi) protein is Ectoine/5-hydroxyectoine-binding periplasmic protein UehA.